Here is a 210-residue protein sequence, read N- to C-terminus: Na(+)-translocating NADH-quinone reductase subunit D (210 aa).

6 helical membrane passes run 14–34 (PIVN…ALAV), 42–62 (LVMA…ISLI), 72–92 (IIVQ…LLQA), 103–123 (VFVG…AYAM), 131–151 (FMDG…VGFV), and 178–198 (NGML…IWII).

The protein belongs to the NqrDE/RnfAE family. In terms of assembly, composed of six subunits; NqrA, NqrB, NqrC, NqrD, NqrE and NqrF.

The protein resides in the cell inner membrane. The catalysed reaction is a ubiquinone + n Na(+)(in) + NADH + H(+) = a ubiquinol + n Na(+)(out) + NAD(+). Functionally, NQR complex catalyzes the reduction of ubiquinone-1 to ubiquinol by two successive reactions, coupled with the transport of Na(+) ions from the cytoplasm to the periplasm. NqrA to NqrE are probably involved in the second step, the conversion of ubisemiquinone to ubiquinol. This Shewanella putrefaciens (strain CN-32 / ATCC BAA-453) protein is Na(+)-translocating NADH-quinone reductase subunit D.